Here is a 95-residue protein sequence, read N- to C-terminus: Progonadoliberin-1 (95 aa).

The signal sequence occupies residues 1-25 (MAPQTSNLWILLLLVVVMMMSQGCC). Pyrrolidone carboxylic acid is present on Gln26. Glycine amide is present on Gly35.

The protein belongs to the GnRH family.

The protein resides in the secreted. Its function is as follows. Stimulates the secretion of gonadotropins. The chain is Progonadoliberin-1 (gnrh1) from Sparus aurata (Gilthead sea bream).